Consider the following 556-residue polypeptide: ATP synthase subunit alpha 2 (556 aa).

177–184 (GDRATGKT) is a binding site for ATP. The tract at residues 514 to 556 (GGHAEDAADDMGGALDGEHASGDATSIAPTPPGGAEAGAPRKR) is disordered. Positions 546–556 (GGAEAGAPRKR) are enriched in low complexity.

It belongs to the ATPase alpha/beta chains family. F-type ATPases have 2 components, CF(1) - the catalytic core - and CF(0) - the membrane proton channel. CF(1) has five subunits: alpha(3), beta(3), gamma(1), delta(1), epsilon(1). CF(0) has three main subunits: a(1), b(2) and c(9-12). The alpha and beta chains form an alternating ring which encloses part of the gamma chain. CF(1) is attached to CF(0) by a central stalk formed by the gamma and epsilon chains, while a peripheral stalk is formed by the delta and b chains.

The protein resides in the cell inner membrane. It carries out the reaction ATP + H2O + 4 H(+)(in) = ADP + phosphate + 5 H(+)(out). Produces ATP from ADP in the presence of a proton gradient across the membrane. The alpha chain is a regulatory subunit. The protein is ATP synthase subunit alpha 2 of Burkholderia thailandensis (strain ATCC 700388 / DSM 13276 / CCUG 48851 / CIP 106301 / E264).